We begin with the raw amino-acid sequence, 267 residues long: Undecaprenyl-diphosphatase (267 aa).

Transmembrane regions (helical) follow at residues 1–21, 40–60, 83–103, 111–131, 144–164, 189–209, 219–239, and 245–265; these read MTLFHLILVAAIQGLTEFLPV, GLAIDVAVHVGSLLAVILYFW, AFLALCLIIATIPVMIAGLII, MMRSVAVIGWTMLGFGLVLYW, GWTLKDAFLMGLAQILSLIPG, AMLMSIPTIIASGAVLGADVI, DGALAAALAFVSALLALALMM, and VSFTPYVVYRVILGLILLVYA.

Belongs to the UppP family.

Its subcellular location is the cell inner membrane. The enzyme catalyses di-trans,octa-cis-undecaprenyl diphosphate + H2O = di-trans,octa-cis-undecaprenyl phosphate + phosphate + H(+). Catalyzes the dephosphorylation of undecaprenyl diphosphate (UPP). Confers resistance to bacitracin. The chain is Undecaprenyl-diphosphatase from Roseobacter denitrificans (strain ATCC 33942 / OCh 114) (Erythrobacter sp. (strain OCh 114)).